The primary structure comprises 380 residues: Cytochrome b (380 aa).

Helical transmembrane passes span 34–54 (FGSL…LLAA), 78–99 (WLIR…YLHI), 114–134 (WNTG…GYVL), and 179–199 (FFTL…IHLT). 2 residues coordinate heme b: His84 and His98. 2 residues coordinate heme b: His183 and His197. A ubiquinone is bound at residue His202. The next 4 membrane-spanning stretches (helical) occupy residues 227–247 (TKDI…ALFS), 289–309 (LGGV…PLLH), 321–341 (LSQL…WIGS), and 348–368 (FIII…ILFP).

Belongs to the cytochrome b family. As to quaternary structure, the cytochrome bc1 complex contains 11 subunits: 3 respiratory subunits (MT-CYB, CYC1 and UQCRFS1), 2 core proteins (UQCRC1 and UQCRC2) and 6 low-molecular weight proteins (UQCRH/QCR6, UQCRB/QCR7, UQCRQ/QCR8, UQCR10/QCR9, UQCR11/QCR10 and a cleavage product of UQCRFS1). This cytochrome bc1 complex then forms a dimer. The cofactor is heme b.

The protein resides in the mitochondrion inner membrane. Component of the ubiquinol-cytochrome c reductase complex (complex III or cytochrome b-c1 complex) that is part of the mitochondrial respiratory chain. The b-c1 complex mediates electron transfer from ubiquinol to cytochrome c. Contributes to the generation of a proton gradient across the mitochondrial membrane that is then used for ATP synthesis. The chain is Cytochrome b (MT-CYB) from Eudyptes chrysolophus (Macaroni penguin).